Reading from the N-terminus, the 902-residue chain is Viral-enhancing factor (902 aa).

The Peptidase M60 domain maps to 27-330 (HRRTEVGVVL…IFAWLYNPQR (304 aa)). 10 N-linked (GlcNAc...) asparagine; by host glycosylation sites follow: Asn73, Asn265, Asn278, Asn339, Asn540, Asn593, Asn594, Asn620, Asn782, and Asn840.

Functionally, involved in disruption of the peritrophic membrane and fusion of nucleocapsids with midgut cells. The sequence is that of Viral-enhancing factor (VEF) from Heliothis (HaGV).